The chain runs to 686 residues: MTPGSRSACRWALLLLAVLWPQQRAAGSGIFQLRLQEFANERGMLANGRPCEPGCRTFFRICLKHYQATFSEGPCTFGNVSTPVLGTNSFVIRDKNSGSGRNPLQLPFNFTWPGTFSLNIQAWHTPGDDLRPETSPGNSLISQIIIQGSLAVGKNWKSDEQNNTLTRLRYSYRVVCSDNYYGDSCSRLCKKRDDHFGHYECQPDGSLSCLPGWTGKYCDQPICLSGCHEQNGYCSKPDECNCRPGWQGPLCNECIPHNGCRHGTCTIPWQCACDEGWGGLFCDQDLNYCTHHSPCKNGSTCSNSGPRGYTCTCLPGYTGEHCELELSKCASNPCRNGGSCKDHENSYHCLCPPGYYGQHCEHSTLTCADSPCFNGGSCRERNQGASYACECPPNFTGSNCEKKVDRCTSNPCANGGQCLNRGPSRTCRCRPGFTGTHCELHISDCARSPCAHGGTCHDLENGPVCTCPAGFSGRRCEVRITNDACASGPCFNGATCYTGLSPNNFVCNCPYGFVGSRCEFPVGLPPSFPWVAVSLGVGLVVLLVLLVMVAVAVRQLRLRRPDDDSREAMNNLSDFQKDNLIPAAQLKNTNQKKELEVDCGLDKSNCGKLQNHTLDYNLAPGFLGRGSTPGKYPHSDKSLGEKVPLRLHSEKPACRISAICSPRDSMYQSVCLISEERNECVIATEV.

Positions 1 to 27 (MTPGSRSACRWALLLLAVLWPQQRAAG) are cleaved as a signal peptide. Over 28–530 (SGIFQLRLQE…PVGLPPSFPW (503 aa)) the chain is Extracellular. Intrachain disulfides connect C51–C55 and C62–C75. N-linked (GlcNAc...) asparagine glycans are attached at residues N79, N109, and N162. Residues 174–218 (VVCSDNYYGDSCSRLCKKRDDHFGHYECQPDGSLSCLPGWTGKYC) enclose the DSL domain. An intrachain disulfide couples C176 to C185. 2 interaction with Notch1 regions span residues 186-188 (SRL) and 192-196 (RDDHF). 26 disulfide bridges follow: C189–C201, C209–C218, C223–C234, C227–C240, C242–C251, C254–C265, C260–C271, C273–C282, C289–C301, C295–C311, C313–C322, C329–C340, C334–C349, C351–C360, C367–C378, C372–C389, C391–C400, C407–C418, C412–C427, C429–C438, C445–C456, C450–C465, C467–C476, C485–C496, C490–C507, and C509–C518. 8 EGF-like domains span residues 219-252 (DQPI…PLCN), 256-283 (PHNG…LFCD), 285-323 (DLNY…EHCE), 325-361 (ELSK…QHCE), 363-401 (STLT…SNCE), 403-439 (KVDR…THCE), 441-477 (HISD…RRCE), and 481-519 (TNDA…SRCE). Residues 531–551 (VAVSLGVGLVVLLVLLVMVAV) form a helical membrane-spanning segment. The Cytoplasmic segment spans residues 552 to 686 (AVRQLRLRRP…RNECVIATEV (135 aa)).

Interacts with NOTCH4. Interacts (via N-terminal DSL and MNNL domains) with NOTCH1 (via EGF-like domains).

Its subcellular location is the cell membrane. Involved in the Notch signaling pathway as Notch ligand. Activates NOTCH1 and NOTCH4. Involved in angiogenesis; negatively regulates endothelial cell proliferation and migration and angiogenic sprouting. Essential for retinal progenitor proliferation. Required for suppressing rod fates in late retinal progenitors as well as for proper generation of other retinal cell types. During spinal cord neurogenesis, inhibits V2a interneuron fate. This chain is Delta-like protein 4, found in Rattus norvegicus (Rat).